The primary structure comprises 80 residues: Serine protease inhibitor Kazal-type 6 (80 aa).

Residues 1–23 (MKTSGVFLLLSLALFCFFSGVFG) form the signal peptide. A Pyrrolidone carboxylic acid modification is found at glutamine 24. Residues 24–80 (QGAQVDCAEFKDPKVYCTRESNPHCGSDGQTYGNKCAFCKAVMKSGGKINLKHRGKC) enclose the Kazal-like domain. Cystine bridges form between cysteine 30/cysteine 62, cysteine 40/cysteine 59, and cysteine 48/cysteine 80.

As to expression, seminal plasma.

It localises to the secreted. In terms of biological role, serine protease inhibitor selective for kallikreins. Efficiently inhibits KLK4, KLK5, KLK6, KLK7, KLK12, KLK13 and KLK14. Doesn't inhibit KLK8. Inhibits acrosin, trypsin, and chymotrypsin. The protein is Serine protease inhibitor Kazal-type 6 (SPINK6) of Bos taurus (Bovine).